Reading from the N-terminus, the 910-residue chain is Inactive disease susceptibility protein LOV1 (910 aa).

Residues 22–60 (ARLNGIGEQVDGLKRQLGRLQSLLKDADAKKHESERVRN) are a coiled coil. Residues 169-461 (EQSVEALAGH…AAEGIITSSD (293 aa)) enclose the NB-ARC domain. LRR repeat units lie at residues 584 to 609 (LPLL…IGDL), 610 to 632 (IHLR…LRNL), and 634 to 655 (LLLY…LKEM).

The protein belongs to the disease resistance NB-LRR family. RPP8/HRT subfamily.

The protein is Inactive disease susceptibility protein LOV1 (LOV1) of Arabidopsis thaliana (Mouse-ear cress).